The sequence spans 614 residues: Sodium- and chloride-dependent betaine transporter (614 aa).

Over 1–44 (MDRKVAVHEDGYPVVSWVPEEGEMMDQKGKDQVKDRGQWTNKME) the chain is Cytoplasmic. 3 helical membrane passes run 45–65 (FVLSVAGEIIGLGNVWRFPYL), 73–92 (AFFIPYFIFFFSCGIPVFFL), and 117–137 (GIGMASVVIESYLNIYYIIIL). Residues 138–210 (AWALFYLFSS…SGIHDLGSLR (73 aa)) are Extracellular-facing. A disulfide bridge connects residues Cys157 and Cys166. Asn171 and Asn183 each carry an N-linked (GlcNAc...) asparagine glycan. The next 9 helical transmembrane spans lie at 211 to 229 (WELALCLLLAWIICYFCIW), 238 to 255 (VVYFTATFPYLMLIILLI), 291 to 308 (IFFSFAICQGCLTALGSY), 320 to 341 (IALCFLNSATSFVAGFVVFSIL), 374 to 393 (MPLSQLWSCLFFIMLLFLGL), 423 to 441 (VLILAISVLCYLMGLLLVT), 458 to 478 (GICLLFLSLFEVICIGWVYGA), 499 to 518 (ISWLFLTPGLCLATFFFSLS), and 538 to 556 (IGWLLAFSSMACVPLFIII). At 557–614 (TFLKTQGSFKKRLRRLITPDPSLPQPGRRPPQDGSSAQNCSSSPAKQELIAWEKETHL) the chain is on the cytoplasmic side. Residues 574–602 (TPDPSLPQPGRRPPQDGSSAQNCSSSPAK) form a disordered region. A compositionally biased stretch (polar residues) spans 589–601 (DGSSAQNCSSSPA).

The protein belongs to the sodium:neurotransmitter symporter (SNF) (TC 2.A.22) family. SLC6A12 subfamily. As to quaternary structure, interacts with LIN7C. As to expression, predominantly expressed in the liver (sinusoidal hepatocyte plasma membranes), also present in the renal medulla, where it localizes to the basolateral membranes of collecting ducts (particularly at the papilla tip) and the thick ascending limbs of Henle (at protein level). Some expression is detected in the leptomeninges, but no expression is detected in brain parenchyma, brain blood vessels, ependymal cells, the renal cortex and the intestine.

Its subcellular location is the basolateral cell membrane. It is found in the cell membrane. It catalyses the reaction 4-aminobutanoate(out) + chloride(out) + 3 Na(+)(out) = 4-aminobutanoate(in) + chloride(in) + 3 Na(+)(in). The catalysed reaction is glycine betaine(out) + 2 chloride(out) + 3 Na(+)(out) = glycine betaine(in) + 2 chloride(in) + 3 Na(+)(in). Functionally, transporter that mediates cellular uptake of betaine and GABA in a sodium- and chloride-dependent process. May have a role in regulation of GABAergic transmission in the brain through the reuptake of GABA into presynaptic terminals, as well as in osmotic regulation. Probably also involved in renal and hepatic osmotic regulation. This is Sodium- and chloride-dependent betaine transporter (Slc6a12) from Mus musculus (Mouse).